The following is a 1106-amino-acid chain: Communication mutant protein F (1106 aa).

The N-terminal stretch at 1 to 28 (MKIYKKNHFLKILIIFIYLSCNILKVNA) is a signal peptide. The G8 domain maps to 254-380 (TIWPNGVVPS…YHNTWSKLAS (127 aa)). N-linked (GlcNAc...) asparagine glycosylation is found at Asn-267, Asn-306, Asn-512, Asn-536, Asn-677, Asn-715, and Asn-833.

The protein belongs to the comF family.

The protein localises to the secreted. The sequence is that of Communication mutant protein F (comF-1) from Dictyostelium discoideum (Social amoeba).